Reading from the N-terminus, the 477-residue chain is Serine/threonine protein phosphatase 2A 55 kDa regulatory subunit B' delta isoform (477 aa).

Belongs to the phosphatase 2A regulatory subunit B56 family. PP2A consists of a common heteromeric enzyme, composed of a catalytic subunit (subunits C), a constant regulatory subunit (subunit A), and a variety of regulatory subunits such as subunits B (the R2/B/PR55/B55, R3/B''/PR72/PR130/PR59 and R5/B'/B56 families). Interacts with SRK2E/OST1. In terms of tissue distribution, expressed ubiquitously.

The protein localises to the cytoplasm. The B regulatory subunit may modulate substrate selectivity and catalytic activity, and may also direct the localization of the catalytic enzyme to a particular subcellular compartment. The sequence is that of Serine/threonine protein phosphatase 2A 55 kDa regulatory subunit B' delta isoform (B'DELTA) from Arabidopsis thaliana (Mouse-ear cress).